The primary structure comprises 887 residues: Tubulin polyglutamylase TTLL7 (887 aa).

The interval methionine 1–glutamate 21 is disordered. The TTL domain occupies lysine 38 to alanine 390. ATP is bound by residues lysine 160, methionine 166–glycine 167, glutamine 188–isoleucine 191, and lysine 201–aspartate 203. Arginine 227 is an L-glutamate binding site. Threonine 249–asparagine 250 lines the ATP pocket. Residues tyrosine 251, serine 252, and lysine 271 each coordinate L-glutamate. Mg(2+)-binding residues include aspartate 336, glutamate 349, and asparagine 351. Lysine 367 is a binding site for L-glutamate. A c-MTBD region region spans residues asparagine 388 to histidine 450. Disordered stretches follow at residues methionine 519–phenylalanine 621 and leucine 651–glutamine 676. Low complexity predominate over residues serine 548 to serine 560. 2 stretches are compositionally biased toward polar residues: residues glutamine 593 to phenylalanine 621 and aspartate 656 to glutamine 670.

The protein belongs to the tubulin--tyrosine ligase family. Interacts with both alpha- and beta-tubulin (via C-terminal tubulin tails). It depends on Mg(2+) as a cofactor. Highly expressed in the nervous system including spinal cord, thalamus, hippocampus, hypothalamus and cerebellum.

The protein resides in the cell projection. Its subcellular location is the cilium. The protein localises to the cytoplasm. It localises to the cytoskeleton. It is found in the cilium basal body. The protein resides in the dendrite. Its subcellular location is the perikaryon. The enzyme catalyses L-glutamyl-[protein] + L-glutamate + ATP = gamma-L-glutamyl-L-glutamyl-[protein] + ADP + phosphate + H(+). It carries out the reaction (L-glutamyl)(n)-gamma-L-glutamyl-L-glutamyl-[protein] + L-glutamate + ATP = (L-glutamyl)(n+1)-gamma-L-glutamyl-L-glutamyl-[protein] + ADP + phosphate + H(+). Its function is as follows. Polyglutamylase which modifies tubulin, generating polyglutamate side chains of variable lengths on the gamma-carboxyl group of specific glutamate residues within the C-terminal tail of tubulin. Mediates both ATP-dependent initiation and elongation steps of the polyglutamylation reaction. Preferentially modifies the beta-tubulin tail over an alpha-tail. Competes with monoglycylase TTLL3 for modification site on beta-tubulin substrate, thereby creating an anticorrelation between glycylation and glutamylation reactions. Required for neurite growth; responsible for the strong increase in tubulin polyglutamylation during postnatal neuronal maturation. This is Tubulin polyglutamylase TTLL7 from Homo sapiens (Human).